A 542-amino-acid chain; its full sequence is MGDIFLCKKVESPKKNLRESKQREEDDEDPDLIYVGVEHVHRDAEVLFVGMISNSKPVVSNILNRVTPGSNSRRKKGHFRQYPAHVSQPANHVTSMAKAIMPVSLSEGRSTDSPVTMKSSSEPGYKMSSPQVVSPSSSDSLPPGTQCLVGAMVSGGGRNESSPDSKRLSTSDINSRDSKRVKLRDGIPGVPSLAVVPSDMSSTISTNTPSQGICNSSNHVQNGVTFPWPDANGKAHFNLTDPERASESALAMTDISSLASQNKTFDPKKENPIVLLSDFYYGQHKGDGQPEQKTHTTFKCLSCVKVLKNIKFMNHMKHHLEFEKQRNDSWEDHTTCQHCHRQFPTPFQLQCHIDSVHIAMGPSAVCKICELSFETDQVLLQHMKDHHKPGEMPYVCQVCHYRSSVFADVETHFRTCHENTKNLLCLFCLKLFKTAIPYMNHCWRHSRRRVLQCSKCRLQFLTLKEEIEHKTKDHQTFKKPEQLQGLPSETKVIIQTSVQPGSSGMASVIVSNTDPQSSPVKTKKKTAMNTRDSRLPCSKDSS.

The interval 66 to 185 (VTPGSNSRRK…RDSKRVKLRD (120 aa)) is disordered. Polar residues predominate over residues 107 to 122 (EGRSTDSPVTMKSSSE). Over residues 128–143 (SSPQVVSPSSSDSLPP) the composition is skewed to low complexity. Residues 161-185 (SSPDSKRLSTSDINSRDSKRVKLRD) show a composition bias toward basic and acidic residues. 4 consecutive C2H2-type zinc fingers follow at residues 334–357 (TTCQ…DSVH), 364–387 (AVCK…KDHH), 423–445 (LLCL…CWRH), and 451–474 (LQCS…TKDH). Residues 499–520 (QPGSSGMASVIVSNTDPQSSPV) show a composition bias toward polar residues. Residues 499 to 542 (QPGSSGMASVIVSNTDPQSSPVKTKKKTAMNTRDSRLPCSKDSS) form a disordered region.

Its subcellular location is the nucleus. Functionally, may function as a transcription factor. In Homo sapiens (Human), this protein is Zinc finger protein 280A (ZNF280A).